The chain runs to 285 residues: Putative alkaline ceramidase dcd3B (285 aa).

3 helical membrane passes run 34 to 54, 77 to 97, and 104 to 124; these read TFSS…MMSA, VLFS…YHAT, and LFDE…ILTI. Residue asparagine 131 is glycosylated (N-linked (GlcNAc...) asparagine). The next 4 membrane-spanning stretches (helical) occupy residues 141–161, 166–186, 200–220, and 236–256; these read RFLP…ITII, IILQ…SYMY, PKKF…SWLT, and LHAV…QFFI.

Belongs to the alkaline ceramidase family.

It is found in the membrane. The protein is Putative alkaline ceramidase dcd3B (dcd3B) of Dictyostelium discoideum (Social amoeba).